The primary structure comprises 330 residues: Pantothenate synthetase 2 (330 aa).

Catalysis depends on His55, which acts as the Proton donor. ATP is bound by residues 167–170 (GEKD), Val196, and 204–207 (ASSR).

Belongs to the pantothenate synthetase family. Homodimer.

Its subcellular location is the cytoplasm. The catalysed reaction is (R)-pantoate + beta-alanine + ATP = (R)-pantothenate + AMP + diphosphate + H(+). Its pathway is cofactor biosynthesis; (R)-pantothenate biosynthesis; (R)-pantothenate from (R)-pantoate and beta-alanine: step 1/1. Its function is as follows. Catalyzes the condensation of pantoate with beta-alanine in an ATP-dependent reaction via a pantoyl-adenylate intermediate. In Frankia alni (strain DSM 45986 / CECT 9034 / ACN14a), this protein is Pantothenate synthetase 2.